The following is a 347-amino-acid chain: Peroxidase C2 (347 aa).

An N-terminal signal peptide occupies residues 1 to 24 (MHSSSSLIKLGFLLLLLNVSLSHA). 4 disulfides stabilise this stretch: Cys35–Cys115, Cys68–Cys73, Cys121–Cys325, and Cys201–Cys233. The active-site Proton acceptor is His66. Residues Asp67, Val70, Gly72, Asp74, and Ser76 each contribute to the Ca(2+) site. N-linked (GlcNAc...) asparagine glycosylation occurs at Asn81. Pro163 lines the substrate pocket. His194 contacts heme b. Thr195 lines the Ca(2+) pocket. N-linked (GlcNAc...) asparagine glycans are attached at residues Asn210 and Asn238. 3 residues coordinate Ca(2+): Asp246, Thr249, and Asp254.

Belongs to the peroxidase family. Classical plant (class III) peroxidase subfamily. Ca(2+) is required as a cofactor. It depends on heme b as a cofactor.

It is found in the secreted. The protein localises to the vacuole. It carries out the reaction 2 a phenolic donor + H2O2 = 2 a phenolic radical donor + 2 H2O. In terms of biological role, removal of H(2)O(2), oxidation of toxic reductants, biosynthesis and degradation of lignin, suberization, auxin catabolism, response to environmental stresses such as wounding, pathogen attack and oxidative stress. These functions might be dependent on each isozyme/isoform in each plant tissue. The chain is Peroxidase C2 (PRXC2) from Armoracia rusticana (Horseradish).